Consider the following 389-residue polypeptide: Probable DNA double-strand break repair nuclease NurA (389 aa).

Asp74 and Asp151 together coordinate Mn(2+).

The protein belongs to the NurA family. Requires Mn(2+) as cofactor.

Its function is as follows. Involved in DNA double-strand break (DSB) repair. Probably acts with HerA to stimulate resection of the 5' strand and produce the long 3' single-strand that is required for RadA loading. This is Probable DNA double-strand break repair nuclease NurA from Methanocaldococcus jannaschii (strain ATCC 43067 / DSM 2661 / JAL-1 / JCM 10045 / NBRC 100440) (Methanococcus jannaschii).